The primary structure comprises 272 residues: Ribosomal RNA small subunit methyltransferase A (272 aa).

S-adenosyl-L-methionine contacts are provided by Asn-16, Leu-18, Gly-43, Glu-64, Asp-89, and Asn-110.

The protein belongs to the class I-like SAM-binding methyltransferase superfamily. rRNA adenine N(6)-methyltransferase family. RsmA subfamily.

The protein resides in the cytoplasm. It catalyses the reaction adenosine(1518)/adenosine(1519) in 16S rRNA + 4 S-adenosyl-L-methionine = N(6)-dimethyladenosine(1518)/N(6)-dimethyladenosine(1519) in 16S rRNA + 4 S-adenosyl-L-homocysteine + 4 H(+). Its function is as follows. Specifically dimethylates two adjacent adenosines (A1518 and A1519) in the loop of a conserved hairpin near the 3'-end of 16S rRNA in the 30S particle. May play a critical role in biogenesis of 30S subunits. In Pseudomonas fluorescens (strain Pf0-1), this protein is Ribosomal RNA small subunit methyltransferase A.